Here is a 364-residue protein sequence, read N- to C-terminus: Serpentine receptor class epsilon-27 (364 aa).

7 helical membrane passes run 31–51 (VIASIELILYSICLYIVVVSL), 64–84 (FIILVAPFFGIWFELIIGKLI), 125–145 (LLIIAGFMEYHYMFSVVFGAV), 167–187 (IFIPIALTVFFQIIAITCSCL), 195–215 (IITINGTWIVSCACSSIVFFL), 257–277 (LIFSELGTISIIGLIIATLLL), and 290–310 (NALFLNPFGICTVAMYSIPAW).

This sequence belongs to the nematode receptor-like protein sre family.

The protein localises to the membrane. The chain is Serpentine receptor class epsilon-27 (sre-27) from Caenorhabditis elegans.